The primary structure comprises 147 residues: FAD synthase (147 aa).

ATP contacts are provided by residues 13–14 (TF), 18–21 (HEGH), Asp100, and Phe127.

Belongs to the archaeal FAD synthase family. As to quaternary structure, homodimer. The cofactor is a divalent metal cation.

It carries out the reaction FMN + ATP + H(+) = FAD + diphosphate. It functions in the pathway cofactor biosynthesis; FAD biosynthesis; FAD from FMN: step 1/1. In terms of biological role, catalyzes the transfer of the AMP portion of ATP to flavin mononucleotide (FMN) to produce flavin adenine dinucleotide (FAD) coenzyme. This Korarchaeum cryptofilum (strain OPF8) protein is FAD synthase.